A 286-amino-acid chain; its full sequence is Protein HEXIM2 (286 aa).

The span at 1–11 (MMATPNQTACN) shows a compositional bias: polar residues. The disordered stretch occupies residues 1-195 (MMATPNQTAC…GEFQRKDFSE (195 aa)). Position 29 is a phosphoserine (Ser29). Thr32 is modified (phosphothreonine). At Ser39 the chain carries Phosphoserine. Residue Thr46 is modified to Phosphothreonine. A phosphoserine mark is found at Ser51, Ser53, Ser71, Ser76, and Ser81. Residues 68–78 (NSRSPRTQSPG) are compositionally biased toward polar residues. Positions 87–103 (ARKKHRRRPSKRKRHWR) are enriched in basic residues. Positions 113 to 132 (KQQRDERQSQRASRVREEMF) are enriched in basic and acidic residues. The interval 140–143 (PYNT) is interaction with P-TEFb. Basic and acidic residues predominate over residues 178–195 (SDGRGRAHGEFQRKDFSE). Residues 207–277 (GRSKQELVRD…QENQMWNREG (71 aa)) are a coiled coil. Residues 226 to 286 (QAEEETRRLQ…GCRCDEEPGT (61 aa)) form an interaction with CCNT1, HEXIM1 and HEXIM2 region.

The protein belongs to the HEXIM family. As to quaternary structure, homooligomer and heterooligomer with HEXIM1; probably dimeric. Core component of the 7SK RNP complex, at least composed of 7SK RNA, LARP7, MEPCE, HEXIM1 (or HEXIM2) and P-TEFb (composed of CDK9 and CCNT1/cyclin-T1). Interacts with CCNT2. Ubiquitously expressed with higher expression in testis. HEXIM1 and HEXIM2 are differentially expressed.

The protein resides in the nucleus. In terms of biological role, transcriptional regulator which functions as a general RNA polymerase II transcription inhibitor. Core component of the 7SK RNP complex: in cooperation with 7SK snRNA sequesters P-TEFb in a large inactive 7SK snRNP complex preventing RNA polymerase II phosphorylation and subsequent transcriptional elongation. This is Protein HEXIM2 (HEXIM2) from Homo sapiens (Human).